The following is a 95-amino-acid chain: Large ribosomal subunit protein uL23 (95 aa).

Belongs to the universal ribosomal protein uL23 family. In terms of assembly, part of the 50S ribosomal subunit. Contacts protein L29, and trigger factor when it is bound to the ribosome.

Its function is as follows. One of the early assembly proteins it binds 23S rRNA. One of the proteins that surrounds the polypeptide exit tunnel on the outside of the ribosome. Forms the main docking site for trigger factor binding to the ribosome. The chain is Large ribosomal subunit protein uL23 from Bacillus subtilis (strain 168).